The primary structure comprises 56 residues: PI-stichotoxin-Hcr2o (56 aa).

The region spanning cysteine 4–cysteine 54 is the BPTI/Kunitz inhibitor domain. Intrachain disulfides connect cysteine 4–cysteine 54, cysteine 13–cysteine 37, and cysteine 29–cysteine 50.

This sequence belongs to the venom Kunitz-type family. Sea anemone type 2 potassium channel toxin subfamily.

The protein resides in the secreted. It localises to the nematocyst. Functionally, this recombinant serine protease inhibitor inhibits both trypsin (Ki=21 nM) and chymotrypsin (Ki=500 nM). It possesses anti-inflammatory activity in vitro. It inhibits macrophage LPS-induced nitric oxide synthesis, and blocks histamine influence on intracellular calcium concentration in murine bone marrow-derived macrophages, which can indicate inhibition of H1-histamine receptor (HRH1). In vitro, it shows cytoprotective activity in the oxidative stress agent 6-hydroxydopamine (6-OHDA)-induced neurotoxicity model. In this model, it decreases reactive oxygen species (ROS) levels, and increases cell viability in a correlated manner. It is possible that the observed effect is due to the ability of this peptides to act as free-radical scavenger. In vivo, it shows analgesic activity, since it increases hot plate and tail flick withdrawal latencies, when using a mice thermal pain stimulation model. The sequence is that of PI-stichotoxin-Hcr2o from Radianthus crispa (Leathery sea anemone).